A 135-amino-acid polypeptide reads, in one-letter code: Small ribosomal subunit protein uS12 (135 aa).

The segment at 1-20 is disordered; it reads MPTINQLVRKGRHSKVTKSK. Over residues 9-18 the composition is skewed to basic residues; it reads RKGRHSKVTK. The residue at position 102 (D102) is a 3-methylthioaspartic acid.

This sequence belongs to the universal ribosomal protein uS12 family. Part of the 30S ribosomal subunit. Contacts proteins S8 and S17. May interact with IF1 in the 30S initiation complex.

With S4 and S5 plays an important role in translational accuracy. In terms of biological role, interacts with and stabilizes bases of the 16S rRNA that are involved in tRNA selection in the A site and with the mRNA backbone. Located at the interface of the 30S and 50S subunits, it traverses the body of the 30S subunit contacting proteins on the other side and probably holding the rRNA structure together. The combined cluster of proteins S8, S12 and S17 appears to hold together the shoulder and platform of the 30S subunit. This chain is Small ribosomal subunit protein uS12, found in Lactobacillus helveticus (strain DPC 4571).